The primary structure comprises 351 residues: Quinolinate phosphoribosyltransferase [decarboxylating] 2a, mitochondrial (351 aa).

Substrate is bound by residues R142, 173–175, R197, K207, E240, D267, 299–301, and 320–322; these read TRK, SGN, and SGA.

This sequence belongs to the NadC/ModD family. In terms of tissue distribution, expressed in roots and flowers.

The protein localises to the mitochondrion. The catalysed reaction is nicotinate beta-D-ribonucleotide + CO2 + diphosphate = quinolinate + 5-phospho-alpha-D-ribose 1-diphosphate + 2 H(+). Its pathway is alkaloid biosynthesis; nicotine biosynthesis. The protein operates within cofactor biosynthesis; NAD(+) biosynthesis; nicotinate D-ribonucleotide from quinolinate: step 1/1. Its function is as follows. Involved in the biosynthesis of pyridine alkaloid natural products, leading mainly to the production of anabasine, anatabine, nicotine and nornicotine, effective deterrents against herbivores with antiparasitic and pesticide properties (neurotoxins); nornicotine serves as the precursor in the synthesis of the carcinogen compound N'-nitrosonornicotine (NNN). Involved in the catabolism of quinolinic acid (QA). The protein is Quinolinate phosphoribosyltransferase [decarboxylating] 2a, mitochondrial of Nicotiana tabacum (Common tobacco).